The following is an 860-amino-acid chain: Transcription factor E2F8 (860 aa).

The segment at 1–114 (MENQKENLFS…NEKSQPSRKE (114 aa)) is disordered. Position 71 is a phosphoserine (serine 71). 2 stretches are compositionally biased toward basic and acidic residues: residues 74–84 (IRSRDQKRGLS) and 92–114 (EARD…SRKE). 2 consecutive DNA-binding regions follow at residues 112–181 (RKEK…TWHG) and 261–347 (RKDK…KWTG). Disordered stretches follow at residues 407-433 (RRKI…PPVP) and 533-616 (TPPH…PKED). Residues 411–426 (SSAPSSPVKSSKAESS) are compositionally biased toward low complexity. Phosphoserine is present on residues serine 412 and serine 416. Positions 542–554 (VCPTQSSNATGSK) are enriched in polar residues. Basic and acidic residues-rich tracts occupy residues 555–565 (DPTDAPTEKTA) and 586–596 (RSKETTGDRGT).

This sequence belongs to the E2F/DP family. As to quaternary structure, homodimer and heterodimer: mainly forms homodimers and, to a lesser extent, heterodimers with E2F8. Dimerization is important for DNA-binding. Interacts with HIF1A.

It localises to the nucleus. In terms of biological role, atypical E2F transcription factor that participates in various processes such as angiogenesis and polyploidization of specialized cells. Mainly acts as a transcription repressor that binds DNA independently of DP proteins and specifically recognizes the E2 recognition site 5'-TTTC[CG]CGC-3'. Directly represses transcription of classical E2F transcription factors such as E2F1: component of a feedback loop in S phase by repressing the expression of E2F1, thereby preventing p53/TP53-dependent apoptosis. Plays a key role in polyploidization of cells in placenta and liver by regulating the endocycle, probably by repressing genes promoting cytokinesis and antagonizing action of classical E2F proteins (E2F1, E2F2 and/or E2F3). Required for placental development by promoting polyploidization of trophoblast giant cells. Acts as a promoter of sprouting angiogenesis, possibly by acting as a transcription activator: associates with HIF1A, recognizes and binds the VEGFA promoter, which is different from canonical E2 recognition site, and activates expression of the VEGFA gene. The sequence is that of Transcription factor E2F8 (E2f8) from Rattus norvegicus (Rat).